Here is a 501-residue protein sequence, read N- to C-terminus: Aldehyde dehydrogenase, cytosolic 1 (501 aa).

An NAD(+)-binding site is contributed by 246-251 (GSTEVG). Glu-269 functions as the Proton acceptor in the catalytic mechanism. The active-site Nucleophile is Cys-303.

This sequence belongs to the aldehyde dehydrogenase family. Homotetramer. In terms of tissue distribution, eye specific, with very high expression in the lens.

Its subcellular location is the cytoplasm. It catalyses the reaction an aldehyde + NAD(+) + H2O = a carboxylate + NADH + 2 H(+). It functions in the pathway alcohol metabolism; ethanol degradation; acetate from ethanol: step 2/2. Major component of the eye of elephant shrews, which in contrast to other mammals, possesses both a lens- and a non-lens class-1 aldehyde dehydrogenase 1. This eye-specific form is a structural protein of the lens and, in other part of the eye, serves as the major form of ALDH1. Can convert/oxidize retinaldehyde to retinoic acid. The chain is Aldehyde dehydrogenase, cytosolic 1 (ALDH1) from Macroscelides proboscideus (Short-eared elephant shrew).